A 209-amino-acid chain; its full sequence is Orotate phosphoribosyltransferase (209 aa).

Residues R96, K100, H102, and 122–130 each bind 5-phospho-alpha-D-ribose 1-diphosphate; that span reads EDLISTGGS. S126 is an orotate binding site.

This sequence belongs to the purine/pyrimidine phosphoribosyltransferase family. PyrE subfamily. Homodimer. The cofactor is Mg(2+).

It carries out the reaction orotidine 5'-phosphate + diphosphate = orotate + 5-phospho-alpha-D-ribose 1-diphosphate. The protein operates within pyrimidine metabolism; UMP biosynthesis via de novo pathway; UMP from orotate: step 1/2. Catalyzes the transfer of a ribosyl phosphate group from 5-phosphoribose 1-diphosphate to orotate, leading to the formation of orotidine monophosphate (OMP). The chain is Orotate phosphoribosyltransferase from Cytophaga hutchinsonii (strain ATCC 33406 / DSM 1761 / CIP 103989 / NBRC 15051 / NCIMB 9469 / D465).